Consider the following 463-residue polypeptide: O-acetyltransferase SAT5 (463 aa).

It belongs to the trichothecene 3-O-acetyltransferase family.

Its pathway is mycotoxin biosynthesis. In terms of biological role, O-acetyltransferase; part of the satratoxin SC1 cluster involved in the biosynthesis of satratoxins, trichothecene mycotoxins that are associated with human food poisonings. Satratoxins are suggested to be made by products of multiple gene clusters (SC1, SC2 and SC3) that encode 21 proteins in all, including polyketide synthases, acetyltransferases, and other enzymes expected to modify the trichothecene skeleton. SC1 encodes 10 proteins, SAT1 to SAT10. The largest are SAT8, which encodes a putative polyketide synthase (PKS) with a conventional non-reducing architecture, and SAT10, a putative protein containing four ankyrin repeats and thus may be involved in protein scaffolding. The putative short-chain reductase SAT3 may assist the PKS in some capacity. SAT6 contains a secretory lipase domain and acts probably as a trichothecene esterase. SAT5 encodes a putative acetyltransferase, and so, with SAT6, may affect endogenous protection from toxicity. The probable transcription factor SAT9 may regulate the expression of the SC1 cluster. SC2 encodes proteins SAT11 to SAT16, the largest of which encodes the putative reducing PKS SAT13. SAT11 is a cytochrome P450 monooxygenase, while SAT14 and SAT16 are probable acetyltransferases. The SC2 cluster may be regulated by the transcription factor SAT15. SC3 is a small cluster that encodes 5 proteins, SAT17 to SAT21. SAT21 is a putative MFS-type transporter which may have a role in exporting secondary metabolites. The four other proteins putatively encoded in SC3 include the taurine hydroxylase-like protein SAT17, the O-methyltransferase SAT18, the acetyltransferase SAT19, and the Cys6-type zinc finger SAT20, the latter being probably involved in regulation of SC3 expression. The sequence is that of O-acetyltransferase SAT5 from Stachybotrys chartarum (strain CBS 109288 / IBT 7711) (Toxic black mold).